A 1455-amino-acid polypeptide reads, in one-letter code: Fanconi anemia group A protein (1455 aa).

A Nuclear localization signal motif is present at residues arginine 18–lysine 34. Residue serine 1449 is modified to Phosphoserine.

In terms of assembly, belongs to the multisubunit FA complex composed of FANCA, FANCB, FANCC, FANCE, FANCF, FANCG, FANCL/PHF9 and FANCM. The complex is not found in FA patients. In complex with FANCF, FANCG and FANCL, but not with FANCC, nor FANCE, interacts with HES1; this interaction may be essential for the stability and nuclear localization of FA core complex proteins. The complex with FANCC and FANCG may also include EIF2AK2 and HSP70. Interacts with FAAP20/C1orf86; interaction is direct. Post-translationally, phosphorylation is required for the formation of the nuclear complex. Not phosphorylated in cells derived from groups A, B, C, E, F, G, and H.

Its subcellular location is the nucleus. The protein localises to the cytoplasm. Functionally, DNA repair protein that may operate in a postreplication repair or a cell cycle checkpoint function. May be involved in interstrand DNA cross-link repair and in the maintenance of normal chromosome stability. The chain is Fanconi anemia group A protein (FANCA) from Homo sapiens (Human).